A 101-amino-acid chain; its full sequence is Putative pterin-4-alpha-carbinolamine dehydratase (101 aa).

It belongs to the pterin-4-alpha-carbinolamine dehydratase family.

The catalysed reaction is (4aS,6R)-4a-hydroxy-L-erythro-5,6,7,8-tetrahydrobiopterin = (6R)-L-erythro-6,7-dihydrobiopterin + H2O. The polypeptide is Putative pterin-4-alpha-carbinolamine dehydratase (Rhodopseudomonas palustris (strain HaA2)).